A 593-amino-acid chain; its full sequence is Actin-histidine N-methyltransferase (593 aa).

Residues M1–S21 are disordered. Residues R75, E104 to F106, R254, D275 to H279, and S325 to F327 each bind S-adenosyl-L-methionine. Positions E94 to G314 constitute an SET domain. The disordered stretch occupies residues G549 to E593. The span at G553–K562 shows a compositional bias: polar residues. Residues S563–E593 show a composition bias toward basic and acidic residues.

Belongs to the class V-like SAM-binding methyltransferase superfamily. SETD3 actin-histidine methyltransferase family.

The protein localises to the cytoplasm. The catalysed reaction is L-histidyl-[protein] + S-adenosyl-L-methionine = N(tele)-methyl-L-histidyl-[protein] + S-adenosyl-L-homocysteine + H(+). Protein-histidine N-methyltransferase that specifically mediates 3-methylhistidine (tele-methylhistidine) methylation of actin at 'His-73'. Does not have protein-lysine N-methyltransferase activity and probably only catalyzes histidine methylation of actin. The polypeptide is Actin-histidine N-methyltransferase (Gallus gallus (Chicken)).